The following is a 389-amino-acid chain: Succinate--CoA ligase [ADP-forming] subunit beta (389 aa).

In terms of domain architecture, ATP-grasp spans 9–244 (KEILRKFGVA…LDEEDPAEVE (236 aa)). Residues lysine 46, 53 to 55 (GRG), glutamate 99, alanine 102, and glutamate 107 contribute to the ATP site. Asparagine 199 and aspartate 213 together coordinate Mg(2+). Substrate contacts are provided by residues asparagine 264 and 321 to 323 (GIM).

This sequence belongs to the succinate/malate CoA ligase beta subunit family. In terms of assembly, heterotetramer of two alpha and two beta subunits. It depends on Mg(2+) as a cofactor.

It catalyses the reaction succinate + ATP + CoA = succinyl-CoA + ADP + phosphate. The catalysed reaction is GTP + succinate + CoA = succinyl-CoA + GDP + phosphate. Its pathway is carbohydrate metabolism; tricarboxylic acid cycle; succinate from succinyl-CoA (ligase route): step 1/1. In terms of biological role, succinyl-CoA synthetase functions in the citric acid cycle (TCA), coupling the hydrolysis of succinyl-CoA to the synthesis of either ATP or GTP and thus represents the only step of substrate-level phosphorylation in the TCA. The beta subunit provides nucleotide specificity of the enzyme and binds the substrate succinate, while the binding sites for coenzyme A and phosphate are found in the alpha subunit. The protein is Succinate--CoA ligase [ADP-forming] subunit beta of Paraburkholderia xenovorans (strain LB400).